Here is a 134-residue protein sequence, read N- to C-terminus: Small ribosomal subunit protein uS8c (134 aa).

The protein belongs to the universal ribosomal protein uS8 family. As to quaternary structure, part of the 30S ribosomal subunit.

It localises to the plastid. The protein localises to the chloroplast. In terms of biological role, one of the primary rRNA binding proteins, it binds directly to 16S rRNA central domain where it helps coordinate assembly of the platform of the 30S subunit. In Gossypium barbadense (Sea Island cotton), this protein is Small ribosomal subunit protein uS8c (rps8).